Reading from the N-terminus, the 223-residue chain is Endonuclease NucS (223 aa).

The protein belongs to the NucS endonuclease family.

The protein resides in the cytoplasm. In terms of biological role, cleaves both 3' and 5' ssDNA extremities of branched DNA structures. This is Endonuclease NucS from Mycolicibacterium vanbaalenii (strain DSM 7251 / JCM 13017 / BCRC 16820 / KCTC 9966 / NRRL B-24157 / PYR-1) (Mycobacterium vanbaalenii).